The chain runs to 123 residues: Cholecystokinin (123 aa).

The signal sequence occupies residues 1–19; that stretch reads MNAGICVCVLLAALSTSSC. Residues 20 to 103 constitute a propeptide that is removed on maturation; that stretch reads LSLPAVSEDG…MGNNHRIKDR (84 aa). The disordered stretch occupies residues 43-67; it reads HTRAAPSSGQLSLLSKAEDDEEPRS. Tyr105 carries the post-translational modification Sulfotyrosine. Phenylalanine amide is present on Phe111. Residues 115–123 constitute a propeptide that is removed on maturation; that stretch reads SAEEYEYSS. Residues Tyr119 and Tyr121 each carry the sulfotyrosine modification.

The protein belongs to the gastrin/cholecystokinin family. The precursor is cleaved by proteases to produce a number of active cholecystokinins. As to expression, expressed in the ovary, kidney, gill, gastrointestinal tract and pituitary. Differentially expressed in the brain in the optic tectum-thalamus, hypothalamus, telencephalon, olfactory bulb and tract, preoptic region and posterior brain region. Expression is strongest in the hypothalamus, where localization is to the posterior ventrolateral region. Expression in the brain is transiently increased 2 hours after feeding. Abundant in the sensory layers of the vagal lobe and along the border of the sensory region of the lobe and the deep fiber laye. Also present in the facial lobe and throughout the glossopharyngeal lobe.

Its subcellular location is the secreted. This peptide hormone induces gall bladder contraction and the release of pancreatic enzymes in the gut. Induces the secretion of gonadotropin and growth hormone from the pituitary. Suppresses food intake and decreases the expression of preprosomatostatin genes in the forebrain. This is Cholecystokinin (cck) from Carassius auratus (Goldfish).